Reading from the N-terminus, the 884-residue chain is Alanine--tRNA ligase (884 aa).

Zn(2+) contacts are provided by His572, His576, Cys673, and His677.

It belongs to the class-II aminoacyl-tRNA synthetase family. Requires Zn(2+) as cofactor.

The protein resides in the cytoplasm. It catalyses the reaction tRNA(Ala) + L-alanine + ATP = L-alanyl-tRNA(Ala) + AMP + diphosphate. In terms of biological role, catalyzes the attachment of alanine to tRNA(Ala) in a two-step reaction: alanine is first activated by ATP to form Ala-AMP and then transferred to the acceptor end of tRNA(Ala). Also edits incorrectly charged Ser-tRNA(Ala) and Gly-tRNA(Ala) via its editing domain. The protein is Alanine--tRNA ligase of Xylella fastidiosa (strain M12).